Here is a 1088-residue protein sequence, read N- to C-terminus: Pathogenesis-related homeodomain protein (1088 aa).

Repeat copies occupy residues 140–152, 173–199, 205–239, 240–274, 283–295, 316–342, 348–382, and 383–417. A 2 X 13 AA repeats region spans residues 140-295; that stretch reads INMGQKETMP…EQKETIPEQV (156 aa). The 2 X 27 AA approximate repeats stretch occupies residues 173 to 342; that stretch reads NSYQSGLPPE…HAQFGHQSDD (170 aa). A 2 X 35 AA approximate tandem repeats (type C) region spans residues 205-274; it reads GLVELVIGQK…SRGRPRKVQN (70 aa). The tract at residues 220 to 282 is disordered; the sequence is PSQLVETGKR…QNSPTSFLEN (63 aa). 2 DNA-binding regions (a.T hook) span residues 226 to 236 and 261 to 271; these read TGKRGRGRPRK and TGKRSRGRPRK. Residues 272–282 show a composition bias toward polar residues; that stretch reads VQNSPTSFLEN. A compositionally biased stretch (polar residues) spans 303 to 320; sequence SLTIPTDNQSRTYNSDQS. 2 disordered regions span residues 303 to 343 and 363 to 484; these read SLTI…SDDT and PSQL…RMEE. Residues 348 to 417 are 2 X 35 AA approximate tandem repeats (type C); sequence GFKELVIGQE…SRGRPRKVQD (70 aa). DNA-binding regions (a.T hook) lie at residues 369 to 379 and 404 to 414; these read AGKRGRGRPRK and TGKRSRGRPRK. Residues 578–635 form a PHD-type zinc finger; the sequence is DIFCAKCGSKDVTLSNDIILCDGACDRGFHQFCLDPPLLKEYIPPDDEGWLCPGCECK. 2 disordered regions span residues 667-810 and 851-901; these read AASG…PLYP and EEYG…ARES. One copy of the 4-1 repeat lies at 678–693; it reads GLPSDDSEDDDYDPGG. Residues 678–744 are 2 X 16 AA Asp/Glu-rich (acidic) repeats; sequence GLPSDDSEDD…SEDDEYDPSG (67 aa). Residues 705 to 718 are compositionally biased toward acidic residues; it reads SSTDESDYQSESDD. One copy of the 4-2 repeat lies at 729 to 744; sequence GLPSDDSEDDEYDPSG. 2 stretches are compositionally biased toward basic and acidic residues: residues 788 to 802 and 874 to 901; these read DHVRNNEEGCGHPEQ and NNSDKEATAMERGRESGDLELDQKARES. Residues 935-994 constitute a DNA-binding region (homeobox); sequence KSTSKTLHGEHATQRLLQSFKENQYPQRAVKESLAAELALSVRQVSNWFNNRRWSFRHSS.

The protein belongs to the PHD-associated homeobox family.

Its subcellular location is the nucleus. Functionally, specifically binds to the fungal elicitor-responsive DNA element, 5'-CTAATTGTTTA-3', of the gene PR2 promoter. This chain is Pathogenesis-related homeodomain protein (PRH), found in Petroselinum crispum (Parsley).